The following is a 181-amino-acid chain: Inner membrane-spanning protein YciB (181 aa).

5 consecutive transmembrane segments (helical) span residues Leu-10 to Ile-30, Met-50 to Asp-70, Ile-80 to Leu-100, Val-118 to Phe-138, and Phe-148 to Leu-168.

Belongs to the YciB family.

Its subcellular location is the cell inner membrane. Plays a role in cell envelope biogenesis, maintenance of cell envelope integrity and membrane homeostasis. The protein is Inner membrane-spanning protein YciB of Shewanella piezotolerans (strain WP3 / JCM 13877).